The chain runs to 136 residues: Large ribosomal subunit protein uL16 (136 aa).

It belongs to the universal ribosomal protein uL16 family. Part of the 50S ribosomal subunit.

Binds 23S rRNA and is also seen to make contacts with the A and possibly P site tRNAs. This is Large ribosomal subunit protein uL16 from Shewanella piezotolerans (strain WP3 / JCM 13877).